Consider the following 196-residue polypeptide: MHMEEHALSAMDDELKLMLGRFRHEQFVEKLGWRLPIPPHQAGYEWDQYDTEHARYLLAFNEHRSIVGCARLIPTTFPNLLEGVFSHACAGAPPRHPAIWEMTRFTTREPQLAMPLFWKTLKTASLAGADAIVGIVNSTMERYYKINGVKYERLGSVIDHQNEKILAIKLSAHREHHRGARLPSGFTSEALLEETA.

The protein belongs to the autoinducer synthase family.

It carries out the reaction a fatty acyl-[ACP] + S-adenosyl-L-methionine = an N-acyl-L-homoserine lactone + S-methyl-5'-thioadenosine + holo-[ACP] + H(+). In terms of biological role, required for the synthesis of a yet unknown N-aceyl-homoserine lactone (N-aceyl-HSL), an autoinducer molecule which binds to PhzR and thus regulates phenazine production. The sequence is that of Acyl-homoserine-lactone synthase (phzI) from Pseudomonas fluorescens.